A 440-amino-acid polypeptide reads, in one-letter code: NADH-quinone oxidoreductase subunit D 1 (440 aa).

It belongs to the complex I 49 kDa subunit family. NDH-1 is composed of 14 different subunits. Subunits NuoB, C, D, E, F, and G constitute the peripheral sector of the complex.

The protein localises to the cell membrane. It carries out the reaction a quinone + NADH + 5 H(+)(in) = a quinol + NAD(+) + 4 H(+)(out). NDH-1 shuttles electrons from NADH, via FMN and iron-sulfur (Fe-S) centers, to quinones in the respiratory chain. The immediate electron acceptor for the enzyme in this species is believed to be a menaquinone. Couples the redox reaction to proton translocation (for every two electrons transferred, four hydrogen ions are translocated across the cytoplasmic membrane), and thus conserves the redox energy in a proton gradient. This Streptomyces griseus subsp. griseus (strain JCM 4626 / CBS 651.72 / NBRC 13350 / KCC S-0626 / ISP 5235) protein is NADH-quinone oxidoreductase subunit D 1.